Here is a 236-residue protein sequence, read N- to C-terminus: uncharacterized protein (236 aa).

An N-terminal signal peptide occupies residues 1 to 22; sequence MEFKMQKIILGMLVVTASNAMA.

This is an uncharacterized protein from Pasteurella multocida (strain Pm70).